The following is a 222-amino-acid chain: Eukaryotic translation initiation factor 3 subunit K (222 aa).

One can recognise a PCI domain in the interval 46 to 208; the sequence is YDLEANLAVL…KIKTKNITEK (163 aa).

The protein belongs to the eIF-3 subunit K family. In terms of assembly, component of the eukaryotic translation initiation factor 3 (eIF-3) complex. The eIF-3 complex interacts with pix.

Its subcellular location is the cytoplasm. Functionally, component of the eukaryotic translation initiation factor 3 (eIF-3) complex, which is involved in protein synthesis of a specialized repertoire of mRNAs and, together with other initiation factors, stimulates binding of mRNA and methionyl-tRNAi to the 40S ribosome. The eIF-3 complex specifically targets and initiates translation of a subset of mRNAs involved in cell proliferation. This Drosophila grimshawi (Hawaiian fruit fly) protein is Eukaryotic translation initiation factor 3 subunit K.